The following is a 123-amino-acid chain: MPAASPTRAGQAAETQALEYLQGQGLQLLARNWRCKGGELDLVMLDADTVVFVEVRYRLHAGFGGALDSIDGRKQKRLVLAASLFLQKEPHWGNHPCRFDVVALQGSHHAGRPLQWLKNAFEC.

Belongs to the UPF0102 family.

This is UPF0102 protein PputGB1_4524 from Pseudomonas putida (strain GB-1).